The primary structure comprises 406 residues: Oligouridylate-binding protein 1 (406 aa).

RRM domains follow at residues 49–123 (RSVY…WAYA) and 134–212 (YNIF…WAAK). The interval 231–250 (TSGTSDDGQEKVVNEDAPEN) is disordered. The 75-residue stretch at 255–329 (TTVYVGNLAP…KPVKCSWGSK (75 aa)) folds into the RRM 3 domain.

The protein resides in the nucleus. Heterogeneous nuclear ribonucleoprotein (hnRNP)-like protein that acts as a component of the pre-mRNA processing machinery. Functions to facilitate the nuclear maturation of plant pre-mRNAs. Binds with high affinity to RNA molecules that contain AU-rich regions. May bind to the 3'-UTR and protects the mRNA against exonucleolytic degradation. Associates with nuclear poly(A)+ RNA in nucleus in vivo. Does not stimulate transcription or the 3' end cleavage/polyadenylation reaction. This chain is Oligouridylate-binding protein 1 (UBP1), found in Nicotiana plumbaginifolia (Leadwort-leaved tobacco).